The sequence spans 408 residues: Phosphoglycerate kinase (408 aa).

Substrate-binding positions include 24–26, R39, 62–65, R121, and R161; these read DLN and HLGR. Residues K211, G307, E338, and 364-367 each bind ATP; that span reads GGDS.

The protein belongs to the phosphoglycerate kinase family. As to quaternary structure, monomer.

It is found in the cytoplasm. It catalyses the reaction (2R)-3-phosphoglycerate + ATP = (2R)-3-phospho-glyceroyl phosphate + ADP. The protein operates within carbohydrate degradation; glycolysis; pyruvate from D-glyceraldehyde 3-phosphate: step 2/5. The protein is Phosphoglycerate kinase of Pseudarthrobacter chlorophenolicus (strain ATCC 700700 / DSM 12829 / CIP 107037 / JCM 12360 / KCTC 9906 / NCIMB 13794 / A6) (Arthrobacter chlorophenolicus).